A 138-amino-acid chain; its full sequence is Transcription antitermination protein NusB (138 aa).

This sequence belongs to the NusB family.

In terms of biological role, involved in transcription antitermination. Required for transcription of ribosomal RNA (rRNA) genes. Binds specifically to the boxA antiterminator sequence of the ribosomal RNA (rrn) operons. In Yersinia pseudotuberculosis serotype O:1b (strain IP 31758), this protein is Transcription antitermination protein NusB.